The sequence spans 219 residues: MAFLLHQARFYTTVNHLRDLPPTVQPEIAFAGRSNAGKSTAINVLCNQKRLAFASKTPGRTQHINYFSVGPAAEPVANLVDLPGYGYAEVPGAAKAHWEMLLSSYLATRSQLCGLILMMDSRRPLTDLDRRMIEWFVPTGKPIHTLLTKCDKLTRQESINALRNTQKGLDAYREQGVKGKLTVQLFSALKRTGLDEAHELIESWVRPSVADEKSEPVAQ.

An EngB-type G domain is found at 24–207 (VQPEIAFAGR…HELIESWVRP (184 aa)). Residues 32-39 (GRSNAGKS), 59-63 (GRTQH), 81-84 (DLPG), 148-151 (TKCD), and 186-188 (FSA) each bind GTP. 2 residues coordinate Mg(2+): S39 and T61.

This sequence belongs to the TRAFAC class TrmE-Era-EngA-EngB-Septin-like GTPase superfamily. EngB GTPase family. It depends on Mg(2+) as a cofactor.

Its function is as follows. Necessary for normal cell division and for the maintenance of normal septation. The sequence is that of Probable GTP-binding protein EngB from Burkholderia ambifaria (strain MC40-6).